The chain runs to 172 residues: Transcriptional repressor NrdR (172 aa).

A zinc finger lies at 3-34 (CPFCGEADTKVIDSRLVAEGDQVRRRRECLSC). Residues 49-139 (PRVVKQDGTR…VYRSFQDINE (91 aa)) form the ATP-cone domain.

This sequence belongs to the NrdR family. Zn(2+) serves as cofactor.

Its function is as follows. Negatively regulates transcription of bacterial ribonucleotide reductase nrd genes and operons by binding to NrdR-boxes. This Marinobacter nauticus (strain ATCC 700491 / DSM 11845 / VT8) (Marinobacter aquaeolei) protein is Transcriptional repressor NrdR.